A 652-amino-acid chain; its full sequence is DNA ligase (652 aa).

Residues 29-33, 78-79, and Glu-107 each bind NAD(+); these read DSDYD and SL. Lys-109 serves as the catalytic N6-AMP-lysine intermediate. Residues Arg-130, Glu-164, Lys-278, and Lys-302 each coordinate NAD(+). Residues Cys-395, Cys-398, Cys-413, and Cys-418 each coordinate Zn(2+). The 76-residue stretch at 577–652 folds into the BRCT domain; the sequence is NSDAALFGLT…IEDEDWLRQL (76 aa).

Belongs to the NAD-dependent DNA ligase family. LigA subfamily. Mg(2+) is required as a cofactor. Mn(2+) serves as cofactor.

It catalyses the reaction NAD(+) + (deoxyribonucleotide)n-3'-hydroxyl + 5'-phospho-(deoxyribonucleotide)m = (deoxyribonucleotide)n+m + AMP + beta-nicotinamide D-nucleotide.. Functionally, DNA ligase that catalyzes the formation of phosphodiester linkages between 5'-phosphoryl and 3'-hydroxyl groups in double-stranded DNA using NAD as a coenzyme and as the energy source for the reaction. It is essential for DNA replication and repair of damaged DNA. The polypeptide is DNA ligase (Streptococcus pyogenes serotype M1).